The following is a 339-amino-acid chain: Uridylate kinase PUMPKIN, chloroplastic (339 aa).

The transit peptide at 1-53 (MAIPLPLTSCSPISTSSSISRTSFVPLTLRNRTFFSNQNYSRRVLISCSSSLS) directs the protein to the chloroplast. The span at 52–79 (LSSDNGSSPDSMNGNGNGNGSSLNGQSS) shows a compositional bias: low complexity. The segment at 52–89 (LSSDNGSSPDSMNGNGNGNGSSLNGQSSFPRLPSFDGT) is disordered. An ATP-binding site is contributed by 102–105 (KVSG). The interval 110-115 (GDEEQN) is involved in allosteric activation by GTP. Gly-144 is a binding site for UMP. ATP contacts are provided by Gly-145 and Arg-149. Asp-165 lines the UMP pocket. Residues 180–184 (QATME) and 189–191 (PTR) contribute to the ATP site. 226–233 (TGNPFFTT) lines the UMP pocket. ATP is bound by residues Thr-253, Phe-259, and Asp-262.

Belongs to the UMP kinase family. Homomultimer. Homohexamer. Forms RNA-containing megadalton-sized complexes. Expressed exclusively in leaves, but not in roots.

The protein resides in the plastid. The protein localises to the chloroplast stroma. It carries out the reaction UMP + ATP = UDP + ADP. It functions in the pathway pyrimidine metabolism; CTP biosynthesis via de novo pathway; UDP from UMP (UMPK route): step 1/1. Functionally, catalyzes the reversible phosphorylation of UMP to UDP. Required for specific post-transcriptional processes of many plastid transcripts (e.g. PSI (PsaA, PsaF), PSII (D1, CP43, CP47), Cytochrome b(6)f (Cytb(6)), ATP synthase (AtpC), LHCs (LHCa3, LHCb2), and NDH (NdhH)), thus being essential for retaining photosynthetic activity in chloroplasts. Associates with group II introns of the plastid transcripts trnG-UCC, trnV-UAC, petB, petD and ndhA to stabilize corresponding precursor RNAs. The protein is Uridylate kinase PUMPKIN, chloroplastic of Arabidopsis thaliana (Mouse-ear cress).